The primary structure comprises 332 residues: 5-dehydro-2-deoxygluconokinase (332 aa).

Belongs to the carbohydrate kinase PfkB family.

The enzyme catalyses 5-dehydro-2-deoxy-D-gluconate + ATP = 6-phospho-5-dehydro-2-deoxy-D-gluconate + ADP + H(+). It functions in the pathway polyol metabolism; myo-inositol degradation into acetyl-CoA; acetyl-CoA from myo-inositol: step 5/7. In terms of biological role, catalyzes the phosphorylation of 5-dehydro-2-deoxy-D-gluconate (2-deoxy-5-keto-D-gluconate or DKG) to 6-phospho-5-dehydro-2-deoxy-D-gluconate (DKGP). The protein is 5-dehydro-2-deoxygluconokinase of Bacillus anthracis (strain A0248).